A 457-amino-acid polypeptide reads, in one-letter code: MILPTIAIIGRPNVGKSTLVNRLCQSNDAIVFDKPGVTRDRTYQNASWGGKEFQIVDTGGLVFDDESEFLPEIRTQVFLALEEASLALLVVDGNQGVTDGDLSIAKWLRNSSCKTIVAVNKCESTTLGISLASEFWKLGLGEPNPVSAIHGSGTGDLLDLVIGELPENNIQDDEEKIMMSIIGRPNVGKSSLLNSICGEKRAIVSDISGTTTDSIDTLIKKGDNNWKIIDTAGIRRKKNVKYGTEFFGINRAFKSIDRSDVCVLVIDAVDGVTDQDQKLAGRIEEQGRACIIVVNKWDLIEKNSSTIYQVEKELRSKLYFLHWSKMIFISALTGQRVDNIFEHALNAVNQHRRRVTTSVVNEVLKESISWKSPPTKRSGKQGRLYYGTQVKNKPPTFTLFVNDPKLFGITYRRYIEKQIRVNLGFEGTPLILLWRGKQQRALNKEVERENIELIQKD.

EngA-type G domains lie at 4–169 and 177–352; these read PTIA…PENN and IMMS…NQHR. GTP-binding positions include 10 to 17, 57 to 61, 120 to 123, 183 to 190, 230 to 234, and 295 to 298; these read GRPNVGKS, DTGGL, NKCE, DTAGI, and NKWD. A KH-like domain is found at 353–438; sequence RRVTTSVVNE…PLILLWRGKQ (86 aa).

Belongs to the TRAFAC class TrmE-Era-EngA-EngB-Septin-like GTPase superfamily. EngA (Der) GTPase family. In terms of assembly, associates with the 50S ribosomal subunit.

In terms of biological role, GTPase that plays an essential role in the late steps of ribosome biogenesis. This chain is GTPase Der, found in Prochlorococcus marinus (strain AS9601).